The primary structure comprises 310 residues: tRNA dimethylallyltransferase (310 aa).

Residue 14-21 (GPTASGKT) participates in ATP binding. Substrate is bound at residue 16 to 21 (TASGKT). Residues 39–42 (DSMQ) form an interaction with substrate tRNA region.

It belongs to the IPP transferase family. As to quaternary structure, monomer. Mg(2+) serves as cofactor.

The catalysed reaction is adenosine(37) in tRNA + dimethylallyl diphosphate = N(6)-dimethylallyladenosine(37) in tRNA + diphosphate. Functionally, catalyzes the transfer of a dimethylallyl group onto the adenine at position 37 in tRNAs that read codons beginning with uridine, leading to the formation of N6-(dimethylallyl)adenosine (i(6)A). This Corynebacterium jeikeium (strain K411) protein is tRNA dimethylallyltransferase.